Here is a 70-residue protein sequence, read N- to C-terminus: U2-agatoxin-Ao1p (70 aa).

The N-terminal stretch at 1–20 is a signal peptide; that stretch reads MRAIISLILISAMVFSMIAA. Positions 21–34 are excised as a propeptide; that stretch reads VPXXEGLQLSEDER. 3 cysteine pairs are disulfide-bonded: Cys37–Cys53, Cys44–Cys58, and Cys52–Cys68. Leu69 bears the Leucine amide mark.

Belongs to the neurotoxin 01 (U2-agtx) family. Expressed by the venom gland.

It is found in the secreted. Its function is as follows. Insect active toxin causing rapid but reversible paralysis in crickets. No activity shown in mammals. Does not show effect on mammalian voltage-gated calcium channels. The sequence is that of U2-agatoxin-Ao1p from Agelena orientalis (Funnel-web spider).